The chain runs to 229 residues: Heptaprenylglyceryl phosphate synthase (229 aa).

Lys12 lines the sn-glycerol 1-phosphate pocket. Residues Asp14 and Ser40 each contribute to the Mg(2+) site. Sn-glycerol 1-phosphate-binding positions include 159–164 (YLEYSG), Gly189, and 209–210 (GN).

The protein belongs to the GGGP/HepGP synthase family. Group I subfamily. In terms of assembly, homodimer. It depends on Mg(2+) as a cofactor.

The catalysed reaction is sn-glycerol 1-phosphate + all-trans-heptaprenyl diphosphate = 3-heptaprenyl-sn-glycero-1-phosphate + diphosphate. Its pathway is membrane lipid metabolism; glycerophospholipid metabolism. Functionally, prenyltransferase that catalyzes in vivo the transfer of the heptaprenyl moiety of heptaprenyl pyrophosphate (HepPP; 35 carbon atoms) to the C3 hydroxyl of sn-glycerol-1-phosphate (G1P), producing heptaprenylglyceryl phosphate (HepGP). This reaction is an ether-bond-formation step in the biosynthesis of archaea-type G1P-based membrane lipids found in Bacillales. The polypeptide is Heptaprenylglyceryl phosphate synthase (Bacillus cereus (strain G9842)).